The following is a 609-amino-acid chain: Ovochymase-2 (609 aa).

An N-terminal signal peptide occupies residues 1-22; the sequence is MPISKDKLILILGMVCLEQGHS. Positions 23–51 are cleaved as a propeptide — activation peptide; it reads ETLSSIRNPDCGQSLVKPQPQNYFSLFSR. The Peptidase S1 domain occupies 52–299; the sequence is IVGGSQVEKG…VLPWILKHIQ (248 aa). Cys77 and Cys93 are oxidised to a cystine. His92 serves as the catalytic Charge relay system. N-linked (GlcNAc...) asparagine glycosylation occurs at Asn104. Residue Glu119 coordinates Ca(2+). The Charge relay system role is filled by Asp142. 4 cysteine pairs are disulfide-bonded: Cys176–Cys246, Cys207–Cys225, Cys236–Cys265, and Cys311–Cys341. Ser240 functions as the Charge relay system in the catalytic mechanism. CUB domains are found at residues 311–421 and 431–543; these read CSEP…YKAL and CRSL…ISFI. The N-linked (GlcNAc...) asparagine glycan is linked to Asn356. Cysteines 365 and 384 form a disulfide. N-linked (GlcNAc...) asparagine glycosylation occurs at Asn415. 2 disulfides stabilise this stretch: Cys431–Cys458 and Cys485–Cys506. N-linked (GlcNAc...) asparagine glycosylation is found at Asn530 and Asn549. Residues 580-609 form a disordered region; that stretch reads HTKPPYEEDIGEMPAIDSGLLKQGERRGKH.

Belongs to the peptidase S1 family. As to expression, only expressed in uterus tissue. Expressed in the initial segment (IS) of the caput epididymis, the region most proximal to the testis.

The protein resides in the secreted. May be required for sperm ADAM3 processing and consequential sperm fertilizing ability. In vitro, has an endopeptidase activity. The chain is Ovochymase-2 from Mus musculus (Mouse).